The primary structure comprises 330 residues: Methionyl-tRNA formyltransferase (330 aa).

116–119 (SLLP) contributes to the (6S)-5,6,7,8-tetrahydrofolate binding site.

This sequence belongs to the Fmt family.

The catalysed reaction is L-methionyl-tRNA(fMet) + (6R)-10-formyltetrahydrofolate = N-formyl-L-methionyl-tRNA(fMet) + (6S)-5,6,7,8-tetrahydrofolate + H(+). Its function is as follows. Attaches a formyl group to the free amino group of methionyl-tRNA(fMet). The formyl group appears to play a dual role in the initiator identity of N-formylmethionyl-tRNA by promoting its recognition by IF2 and preventing the misappropriation of this tRNA by the elongation apparatus. The chain is Methionyl-tRNA formyltransferase from Nitratidesulfovibrio vulgaris (strain ATCC 29579 / DSM 644 / CCUG 34227 / NCIMB 8303 / VKM B-1760 / Hildenborough) (Desulfovibrio vulgaris).